Consider the following 236-residue polypeptide: Lipid A 4'-phosphatase (236 aa).

Helical transmembrane passes span 26–46, 58–78, 134–153, 160–182, and 200–220; these read FFYLISAKWTWVIMSIAFLFF, FIVGAVLLSVLICDQLSSSFF, YTWTIWSVVALVIYSRIYIG, IIPGIAVGLIVGHFVYKVYLYAR, and GDSIRLWTLSLIGFVFAMLCM.

This sequence belongs to the lipid A LpxF 4'-phosphatase family.

Its subcellular location is the cell inner membrane. The protein operates within bacterial outer membrane biogenesis; LPS lipid A biosynthesis. In terms of biological role, removes the 4'-phosphate group from lipid A species. Absence of phosphate groups in lipid A renders the bacteria resistant to host-derived cationic antimicrobial peptides (CAMP) and allows it to camouflage itself from the host innate immune response. Removal of the 4'-phosphate may be required to generate the substrate for deacylation of the pentaacyl lipid A to the tetraccylated lipid A species. The protein is Lipid A 4'-phosphatase of Porphyromonas gingivalis (strain ATCC 33277 / DSM 20709 / CIP 103683 / JCM 12257 / NCTC 11834 / 2561).